The sequence spans 168 residues: Cyanate hydratase (168 aa).

Residues R91, E94, and S117 contribute to the active site.

The protein belongs to the cyanase family.

The enzyme catalyses cyanate + hydrogencarbonate + 3 H(+) = NH4(+) + 2 CO2. Catalyzes the reaction of cyanate with bicarbonate to produce ammonia and carbon dioxide. This Arabidopsis thaliana (Mouse-ear cress) protein is Cyanate hydratase.